The primary structure comprises 112 residues: Cell cycle protein GpsB (112 aa).

Positions 42–77 (YQKMADMNNEVVKLSEENHKLKKELEELRLRVATSR) form a coiled coil. Residues 74–96 (ATSRPQDNKNFSSNNSSSASNNV) form a disordered region. Low complexity predominate over residues 81-95 (NKNFSSNNSSSASNN).

It belongs to the GpsB family. As to quaternary structure, forms polymers through the coiled coil domains. Interacts with PBP1, MreC and EzrA.

The protein localises to the cytoplasm. Divisome component that associates with the complex late in its assembly, after the Z-ring is formed, and is dependent on DivIC and PBP2B for its recruitment to the divisome. Together with EzrA, is a key component of the system that regulates PBP1 localization during cell cycle progression. Its main role could be the removal of PBP1 from the cell pole after pole maturation is completed. Also contributes to the recruitment of PBP1 to the division complex. Not essential for septum formation. The protein is Cell cycle protein GpsB of Staphylococcus epidermidis (strain ATCC 12228 / FDA PCI 1200).